Here is a 493-residue protein sequence, read N- to C-terminus: Glutamate--tRNA ligase (493 aa).

The short motif at Pro10 to Thr20 is the 'HIGH' region element. Positions Lys251–Arg255 match the 'KMSKS' region motif. ATP is bound at residue Lys254.

This sequence belongs to the class-I aminoacyl-tRNA synthetase family. Glutamate--tRNA ligase type 1 subfamily. As to quaternary structure, monomer.

It localises to the cytoplasm. It carries out the reaction tRNA(Glu) + L-glutamate + ATP = L-glutamyl-tRNA(Glu) + AMP + diphosphate. Functionally, catalyzes the attachment of glutamate to tRNA(Glu) in a two-step reaction: glutamate is first activated by ATP to form Glu-AMP and then transferred to the acceptor end of tRNA(Glu). In Pseudomonas savastanoi pv. phaseolicola (strain 1448A / Race 6) (Pseudomonas syringae pv. phaseolicola (strain 1448A / Race 6)), this protein is Glutamate--tRNA ligase.